The sequence spans 119 residues: uncharacterized protein (119 aa).

Residue Cys13 is part of the active site.

It belongs to the ArsC family.

This is an uncharacterized protein from Escherichia coli (strain K12).